The chain runs to 338 residues: Glycerol-3-phosphate dehydrogenase [NAD(P)+] (338 aa).

NADPH contacts are provided by Ser13, Trp14, and Lys108. Residues Lys108, Gly139, and Ser141 each coordinate sn-glycerol 3-phosphate. An NADPH-binding site is contributed by Ala143. Sn-glycerol 3-phosphate is bound by residues Lys194, Asp247, Ser257, Arg258, and Asn259. The active-site Proton acceptor is Lys194. Arg258 contacts NADPH. NADPH-binding residues include Val282 and Glu284.

This sequence belongs to the NAD-dependent glycerol-3-phosphate dehydrogenase family.

Its subcellular location is the cytoplasm. The catalysed reaction is sn-glycerol 3-phosphate + NAD(+) = dihydroxyacetone phosphate + NADH + H(+). It carries out the reaction sn-glycerol 3-phosphate + NADP(+) = dihydroxyacetone phosphate + NADPH + H(+). Its pathway is membrane lipid metabolism; glycerophospholipid metabolism. In terms of biological role, catalyzes the reduction of the glycolytic intermediate dihydroxyacetone phosphate (DHAP) to sn-glycerol 3-phosphate (G3P), the key precursor for phospholipid synthesis. In Streptococcus pyogenes serotype M12 (strain MGAS9429), this protein is Glycerol-3-phosphate dehydrogenase [NAD(P)+].